The chain runs to 78 residues: Probable [Fe-S]-dependent transcriptional repressor (78 aa).

C56, C61, C64, and C70 together coordinate iron-sulfur cluster.

This sequence belongs to the FeoC family.

In terms of biological role, may function as a transcriptional regulator that controls feoABC expression. This Escherichia coli O17:K52:H18 (strain UMN026 / ExPEC) protein is Probable [Fe-S]-dependent transcriptional repressor.